We begin with the raw amino-acid sequence, 160 residues long: Iron-sulfur assembly protein IscA1 (160 aa).

This sequence belongs to the HesB/IscA family. In terms of assembly, tetramer.

It is found in the mitochondrion. Its pathway is cofactor biosynthesis; iron-sulfur cluster biosynthesis. In terms of biological role, participates in iron-sulfur cluster formation (ISC) pathway for iron-sulfur (Fe-S) cluster biogenesis. Can bind iron and [4Fe-4S] clusters. May function as an iron chaperone. This chain is Iron-sulfur assembly protein IscA1, found in Plasmodium falciparum (isolate 3D7).